Consider the following 96-residue polypeptide: Putative septation protein SpoVG (96 aa).

This sequence belongs to the SpoVG family.

Functionally, could be involved in septation. The protein is Putative septation protein SpoVG of Borrelia hermsii (strain HS1 / DAH).